The following is a 758-amino-acid chain: Relaxin receptor 1 (758 aa).

The Extracellular portion of the chain corresponds to 1–408; sequence MTSGPFFFCV…LENLLASIIQ (408 aa). The region spanning 26–63 is the LDL-receptor class A domain; it reads SCPLGSFPCGNISKCLPQLLHCNGVDDCGNQADEDNCG. Cystine bridges form between Cys-27-Cys-40, Cys-34-Cys-53, and Cys-47-Cys-62. Residue Asn-36 is glycosylated (N-linked (GlcNAc...) asparagine). 6 residues coordinate Ca(2+): Leu-45, Asn-48, Val-50, Asp-52, Asp-58, and Glu-59. LRR repeat units follow at residues 105-125, 126-148, 149-172, 173-196, 198-220, 221-244, 246-269, 270-293, 294-317, 319-341, and 342-365; these read LCRDLELDCDEANLRAVPSVS, SNVTVMSLQWNFIRTLPPNSFRK, YHDLQKLCLQNNKIRSVSVSAFRG, LHSLTKLYLSHNRITFLKPGVFED, HRLEWLIIEDNHLSRISPLTFYG, LNSLILLVLMNNALTRLPDKPLCQ, MPRLHWLDFEGNRIHNLRNLTFIS, CNNLTVLVMRKNKINHLNEHAFTH, LQKLDELDLGSNKIENLPPNIFKD, KELSQLNISYNPIQKIEVNQFDY, and LAKLKSLSLEGIEISNIQQRMFRP. Asn-127 is a glycosylation site (N-linked (GlcNAc...) asparagine). Residues Asn-264 and Asn-272 are each glycosylated (N-linked (GlcNAc...) asparagine). N-linked (GlcNAc...) asparagine glycosylation is present at Asn-325. A glycan (N-linked (GlcNAc...) asparagine) is linked at Asn-368. The helical transmembrane segment at 409–429 threads the bilayer; the sequence is RVFVWVVSAITCFGNIFVICM. At 430–443 the chain is on the cytoplasmic side; it reads RPYIRSENKLHAMS. Residues 444–464 form a helical membrane-spanning segment; it reads IMSLCCADCLMGVYLFVIGAF. Residues 465-486 lie on the Extracellular side of the membrane; it reads DLKFRGEYRKHAQPWMESVHCQ. Cys-485 and Cys-563 are disulfide-bonded. The chain crosses the membrane as a helical span at residues 487–507; it reads FMGSLAVLSTEVSVLLLTFLT. The Cytoplasmic portion of the chain corresponds to 508-527; that stretch reads LEKYICIVYPFRCLRPRKCR. Residues 528–548 traverse the membrane as a helical segment; the sequence is TVAVLIFIWITGFIVAFAPLG. Topologically, residues 549–577 are extracellular; the sequence is NKEFFKNYYGTNGVCFPLHSEDTGSTGAQ. A helical transmembrane segment spans residues 578-598; sequence IYSVVIFLGINLVAFIIIVFS. Residues 599 to 629 are Cytoplasmic-facing; it reads YGSMFYSVHQSTITATEIQKQVKKEMILAKR. The chain crosses the membrane as a helical span at residues 630-650; the sequence is FFFIVFTDALCWIPIFILKFL. Over 651 to 660 the chain is Extracellular; it reads SLIRVEIPDT. The chain crosses the membrane as a helical span at residues 661–681; the sequence is ITSWVVIFILPINSALNPIIY. At 682 to 758 the chain is on the cytoplasmic side; the sequence is TLTTRPFKEM…SRSSRLNSYS (77 aa).

This sequence belongs to the G-protein coupled receptor 1 family. As to quaternary structure, interacts with C1QTNF8. As to expression, detected in brain cortex, and at low levels in testis.

It localises to the cell membrane. Its function is as follows. Receptor for relaxins. The activity of this receptor is mediated by G proteins leading to stimulation of adenylate cyclase and an increase of cAMP. Binding of the ligand may also activate a tyrosine kinase pathway that inhibits the activity of a phosphodiesterase that degrades cAMP. The sequence is that of Relaxin receptor 1 (Rxfp1) from Rattus norvegicus (Rat).